A 449-amino-acid chain; its full sequence is Uric acid permease PucJ (449 aa).

13 helical membrane-spanning segments follow: residues 11–31 (LSLQ…LLVG), 41–61 (LSYL…LQTL), 67–87 (GIGL…MIAI), 91–111 (YGIH…FLFA), 119–139 (VLFP…SLVP), 158–178 (EYGS…ILVL), 191–211 (VLIG…VSFS), 229–249 (APAF…VIIV), 277–297 (AEGI…NTFA), 313–333 (IVVT…IAAL), 334–354 (ASAV…GMVI), 372–392 (LLTI…PGIF), and 401–421 (ILVS…NLFF).

Belongs to the nucleobase:cation symporter-2 (NCS2) (TC 2.A.40) family.

It is found in the cell membrane. Uptake of uric acid. The chain is Uric acid permease PucJ (pucJ) from Bacillus subtilis (strain 168).